The sequence spans 509 residues: Angiopoietin-4 (509 aa).

Positions 1 to 21 (MLCQPAMLLDGLLLLATMAAA) are cleaved as a signal peptide. 8 N-linked (GlcNAc...) asparagine glycosylation sites follow: Asn105, Asn135, Asn149, Asn167, Asn256, Asn306, Asn317, and Asn417. Residues 181–269 (LSTNKLERQM…LQQQQQQLTE (89 aa)) adopt a coiled-coil conformation. In terms of domain architecture, Fibrinogen C-terminal spans 288–508 (KTPKPVFQDC…GTRMMLRPMG (221 aa)). Cys297 and Cys326 are oxidised to a cystine. A disordered region spans residues 416 to 436 (VNDSSSSAGRKNSLAPQGTKF). The cysteines at positions 450 and 463 are disulfide-linked.

As to quaternary structure, homodimer; disulfide-linked. Interacts with TEK/TIE2. As to expression, widely expressed.

Its subcellular location is the secreted. Its function is as follows. Binds to TEK/TIE2, modulating ANGPT1 signaling. Can induce tyrosine phosphorylation of TEK/TIE2. Promotes endothelial cell survival, migration and angiogenesis. The chain is Angiopoietin-4 (Angpt4) from Mus musculus (Mouse).